Reading from the N-terminus, the 103-residue chain is Methanol dehydrogenase [cytochrome c] subunit 2 (103 aa).

An N-terminal signal peptide occupies residues 1-20; it reads MKRILTLTVAALALGTPALA. Cys26 and Cys32 are oxidised to a cystine.

This sequence belongs to the methanol dehydrogenase subunit 2 family. As to quaternary structure, heterotetramer composed of 2 alpha and 2 beta subunits.

It localises to the periplasm. The enzyme catalyses 2 Fe(III)-[cytochrome cL] + a primary alcohol = 2 Fe(II)-[cytochrome cL] + an aldehyde + 2 H(+). Functionally, catalyzes the oxidation of primary alcohols including methanol. The sequence is that of Methanol dehydrogenase [cytochrome c] subunit 2 (moxI) from Paracoccus denitrificans.